Reading from the N-terminus, the 132-residue chain is uncharacterized protein (132 aa).

The helical transmembrane segment at 105–125 threads the bilayer; that stretch reads VHGYVVFWLSILCILIIIFVY.

It localises to the membrane. This is an uncharacterized protein from Methanocaldococcus jannaschii (strain ATCC 43067 / DSM 2661 / JAL-1 / JCM 10045 / NBRC 100440) (Methanococcus jannaschii).